Here is a 333-residue protein sequence, read N- to C-terminus: Ketol-acid reductoisomerase (NADP(+)) (333 aa).

The region spanning 2-182 (AKLYYEKDCN…GGARAGVLKT (181 aa)) is the KARI N-terminal Rossmann domain. NADP(+)-binding positions include 25–28 (YGSQ), serine 51, serine 53, and 83–86 (DEKQ). Residue histidine 108 is part of the active site. Glycine 134 is an NADP(+) binding site. One can recognise a KARI C-terminal knotted domain in the interval 183-328 (TFKEETETDL…KELRDMMSWS (146 aa)). Residues aspartate 191, glutamate 195, glutamate 227, and glutamate 231 each contribute to the Mg(2+) site. Serine 252 is a substrate binding site.

The protein belongs to the ketol-acid reductoisomerase family. It depends on Mg(2+) as a cofactor.

The catalysed reaction is (2R)-2,3-dihydroxy-3-methylbutanoate + NADP(+) = (2S)-2-acetolactate + NADPH + H(+). The enzyme catalyses (2R,3R)-2,3-dihydroxy-3-methylpentanoate + NADP(+) = (S)-2-ethyl-2-hydroxy-3-oxobutanoate + NADPH + H(+). Its pathway is amino-acid biosynthesis; L-isoleucine biosynthesis; L-isoleucine from 2-oxobutanoate: step 2/4. The protein operates within amino-acid biosynthesis; L-valine biosynthesis; L-valine from pyruvate: step 2/4. In terms of biological role, involved in the biosynthesis of branched-chain amino acids (BCAA). Catalyzes an alkyl-migration followed by a ketol-acid reduction of (S)-2-acetolactate (S2AL) to yield (R)-2,3-dihydroxy-isovalerate. In the isomerase reaction, S2AL is rearranged via a Mg-dependent methyl migration to produce 3-hydroxy-3-methyl-2-ketobutyrate (HMKB). In the reductase reaction, this 2-ketoacid undergoes a metal-dependent reduction by NADPH to yield (R)-2,3-dihydroxy-isovalerate. This is Ketol-acid reductoisomerase (NADP(+)) from Alkaliphilus metalliredigens (strain QYMF).